The primary structure comprises 1281 residues: Dynactin subunit 1 (1281 aa).

The interval 1–25 (MAQSKRHVYSRTPSGSRMSAEASAR) is disordered. The 43-residue stretch at 48–90 (GATLFATGKWVGVILDEAKGKNDGTVQGRKYFTCDEGHGIFVR) folds into the CAP-Gly domain. Residues 99-225 (DGADTTSPET…EEEGLRAQVR (127 aa)) form a disordered region. The span at 102–114 (DTTSPETPDSSAS) shows a compositional bias: polar residues. 4 positions are modified to phosphothreonine: Thr108, Thr145, Thr146, and Thr147. The segment covering 129–152 (SKLRGPKPKKAPTARKTTTRRPKP) has biased composition (basic residues). Over residues 161–205 (AGASSSLGPSGSASAGELSSSEPSTPAQTPLAAPIIPTPALTSPG) the composition is skewed to low complexity. Phosphoserine is present on residues Ser179 and Ser212. Over residues 214-225 (SKEEEGLRAQVR) the composition is skewed to basic and acidic residues. Coiled-coil stretches lie at residues 217-540 (EEGL…QQEA) and 952-1043 (IKEL…QSKR). The interaction with HPS6 stretch occupies residues 911–1281 (EYDAERPPSK…LHQLHDRLIS (371 aa)). The segment at 1065-1084 (GEEQQRGGAPGQAPGIVPGP) is disordered.

It belongs to the dynactin 150 kDa subunit family. In terms of assembly, monomer and homodimer. Subunit of dynactin, a multiprotein complex part of a tripartite complex with dynein and a adapter, such as BICDL1, BICD2 or HOOK3. The dynactin complex is built around ACTR1A/ACTB filament and consists of an actin-related filament composed of a shoulder domain, a pointed end and a barbed end. Its length is defined by its flexible shoulder domain. The soulder is composed of 2 DCTN1 subunits, 4 DCTN2 and 2 DCTN3. DCTN1/p150(glued) binds directly to microtubules and to cytoplasmic dynein. The 4 DCNT2 (via N-terminus) bind the ACTR1A filament and act as molecular rulers to determine the length. The pointed end is important for binding dynein-dynactin cargo adapters. Consists of 4 subunits: ACTR10, DCNT4, DCTN5 and DCTN6. The barbed end is composed of a CAPZA1:CAPZB heterodimers, which binds ACTR1A/ACTB filament and dynactin and stabilizes dynactin. Interacts with the C-terminus of MAPRE1, MAPRE2 and MAPRE3. Interacts (via C-terminus) with SNX6. Interacts with CLN3, DYNAP, ECPAS and FBXL5. Interacts with MISP; this interaction regulates its distribution at the cell cortex. Interacts with CEP131. Interacts with CEP126. Interacts with CLIP1. Interacts with dynein intermediate chain and dynein heavy chain. Interacts with PLK1 (via POLO-box domain). Interacts with TBCB. Binds preferentially to tyrosinated microtubules than to detyrosinated microtubules. Interacts with PARD6A. Interacts with HPS6. Interacts with KIF3A. Interacts with BICD2. Interacts with DST (isoform 9). Interacts with DST (isoform 1). Identified in a complex with MREG and RILP. Interacts with BCCIP (isoform 2/alpha). Interacts with DCDC1. Interacts with AKNA. Interacts with DYNC1I2. Interacts with RUFY3 and RUFY4. In terms of processing, ubiquitinated by a SCF complex containing FBXL5, leading to its degradation by the proteasome. Post-translationally, phosphorylation by SLK at Thr-145, Thr-146 and Thr-147 targets DCTN1 to the centrosome. It is uncertain if SLK phosphorylates all three threonines or one or two of them. PLK1-mediated phosphorylation at Ser-179 is essential for its localization in the nuclear envelope, promotes its dissociation from microtubules during early mitosis and positively regulates nuclear envelope breakdown during prophase.

It is found in the cytoplasm. It localises to the cytoskeleton. Its subcellular location is the microtubule organizing center. The protein localises to the centrosome. The protein resides in the centriole. It is found in the spindle. It localises to the nucleus envelope. Its subcellular location is the cell cortex. Part of the dynactin complex that activates the molecular motor dynein for ultra-processive transport along microtubules. Plays a key role in dynein-mediated retrograde transport of vesicles and organelles along microtubules by recruiting and tethering dynein to microtubules. Binds to both dynein and microtubules providing a link between specific cargos, microtubules and dynein. Essential for targeting dynein to microtubule plus ends, recruiting dynein to membranous cargos and enhancing dynein processivity (the ability to move along a microtubule for a long distance without falling off the track). Can also act as a brake to slow the dynein motor during motility along the microtubule. Can regulate microtubule stability by promoting microtubule formation, nucleation and polymerization and by inhibiting microtubule catastrophe in neurons. Inhibits microtubule catastrophe by binding both to microtubules and to tubulin, leading to enhanced microtubule stability along the axon. Plays a role in metaphase spindle orientation. Plays a role in centriole cohesion and subdistal appendage organization and function. Its recruitment to the centriole in a KIF3A-dependent manner is essential for the maintenance of centriole cohesion and the formation of subdistal appendage. Also required for microtubule anchoring at the mother centriole. Plays a role in primary cilia formation. This chain is Dynactin subunit 1 (DCTN1), found in Sus scrofa (Pig).